Here is a 98-residue protein sequence, read N- to C-terminus: NADH-ubiquinone oxidoreductase chain 4L (98 aa).

The next 3 helical transmembrane spans lie at 1-21, 29-49, and 61-81; these read MTMVYANIFLAFIMSLMGLLM, SLLCLEGMMLSLFVMMTVTIL, and IILLVFAACEAALGLSLLVMV.

It belongs to the complex I subunit 4L family. In terms of assembly, core subunit of respiratory chain NADH dehydrogenase (Complex I) which is composed of 45 different subunits.

The protein resides in the mitochondrion inner membrane. The catalysed reaction is a ubiquinone + NADH + 5 H(+)(in) = a ubiquinol + NAD(+) + 4 H(+)(out). Core subunit of the mitochondrial membrane respiratory chain NADH dehydrogenase (Complex I) which catalyzes electron transfer from NADH through the respiratory chain, using ubiquinone as an electron acceptor. Part of the enzyme membrane arm which is embedded in the lipid bilayer and involved in proton translocation. This Mirounga angustirostris (Northern elephant seal) protein is NADH-ubiquinone oxidoreductase chain 4L (MT-ND4L).